Here is a 171-residue protein sequence, read N- to C-terminus: uncharacterized protein (171 aa).

Residues 5–25 (FLLTIFALWVGGFGYYLYLIN) traverse the membrane as a helical segment.

Its subcellular location is the membrane. This is an uncharacterized protein from Rickettsia conorii (strain ATCC VR-613 / Malish 7).